Here is a 301-residue protein sequence, read N- to C-terminus: Ornithine carbamoyltransferase (301 aa).

Residues Arg100 and 127 to 130 (HPCQ) contribute to the carbamoyl phosphate site. Residues Asn158, Asp221, and 225 to 226 (SM) each bind L-ornithine. Residues Cys260 and Arg288 each coordinate carbamoyl phosphate.

This sequence belongs to the aspartate/ornithine carbamoyltransferase superfamily. OTCase family. As to quaternary structure, the enzyme is present as a mixture of trimers and dodecamers, with the relative proportions of the two forms depending on the salt concentration. In addition, the trimeric fraction could reassociate into dodecamers when the salt concentration is increased. It appears that in vivo, the main fraction is in the dodecameric form.

It is found in the cytoplasm. The enzyme catalyses carbamoyl phosphate + L-ornithine = L-citrulline + phosphate + H(+). It participates in amino-acid biosynthesis; L-arginine biosynthesis; L-arginine from L-ornithine and carbamoyl phosphate: step 1/3. Its activity is regulated as follows. Inhibited by excess of arginine and by the bisubstrate delta-N-phosphonoacetyl-L-ornithine (PALO). In terms of biological role, reversibly catalyzes the transfer of the carbamoyl group from carbamoyl phosphate (CP) to the N(epsilon) atom of ornithine (ORN) to produce L-citrulline, which is a substrate for argininosuccinate synthetase, the enzyme involved in the final step in arginine biosynthesis. The sequence is that of Ornithine carbamoyltransferase from Moritella abyssi.